Reading from the N-terminus, the 383-residue chain is Processive diacylglycerol beta-glucosyltransferase (383 aa).

The protein belongs to the glycosyltransferase 28 family. UgtP subfamily.

It localises to the cell membrane. The catalysed reaction is a 1,2-diacyl-3-O-(beta-D-glucopyranosyl)-sn-glycerol + UDP-alpha-D-glucose = a 1,2-diacyl-3-O-(beta-D-Glc-(1-&gt;6)-beta-D-Glc)-sn-glycerol + UDP + H(+). It carries out the reaction a 1,2-diacyl-3-O-(beta-D-Glc-(1-&gt;6)-beta-D-Glc)-sn-glycerol + UDP-alpha-D-glucose = a 1,2-diacyl-3-O-(beta-D-Glc-(1-&gt;6)-beta-D-Glc-(1-&gt;6)-beta-D-Glc)-sn-glycerol + UDP + H(+). It catalyses the reaction a 1,2-diacyl-sn-glycerol + UDP-alpha-D-glucose = a 1,2-diacyl-3-O-(beta-D-glucopyranosyl)-sn-glycerol + UDP + H(+). Its pathway is glycolipid metabolism; diglucosyl-diacylglycerol biosynthesis. Its function is as follows. Processive glucosyltransferase involved in the biosynthesis of both the bilayer- and non-bilayer-forming membrane glucolipids. Is able to successively transfer up to three glucosyl residues to diacylglycerol (DAG), thereby catalyzing the formation of beta-monoglucosyl-DAG (3-O-(beta-D-glucopyranosyl)-1,2-diacyl-sn-glycerol), beta-diglucosyl-DAG (3-O-(beta-D-glucopyranosyl-beta-(1-&gt;6)-D-glucopyranosyl)-1,2-diacyl-sn-glycerol) and beta-triglucosyl-DAG (3-O-(beta-D-glucopyranosyl-beta-(1-&gt;6)-D-glucopyranosyl-beta-(1-&gt;6)-D-glucopyranosyl)-1,2-diacyl-sn-glycerol). Beta-diglucosyl-DAG is the predominant glycolipid found in Bacillales and is also used as a membrane anchor for lipoteichoic acid (LTA). This Bacillus licheniformis (strain ATCC 14580 / DSM 13 / JCM 2505 / CCUG 7422 / NBRC 12200 / NCIMB 9375 / NCTC 10341 / NRRL NRS-1264 / Gibson 46) protein is Processive diacylglycerol beta-glucosyltransferase.